The sequence spans 486 residues: Cysteine--tRNA ligase (486 aa).

Cysteine 29 contacts Zn(2+). Positions isoleucine 31–histidine 41 match the 'HIGH' region motif. Residues cysteine 215, histidine 240, and glutamate 244 each contribute to the Zn(2+) site. Positions lysine 272 to serine 276 match the 'KMSKS' region motif. ATP is bound at residue lysine 275.

The protein belongs to the class-I aminoacyl-tRNA synthetase family. Monomer. Requires Zn(2+) as cofactor.

Its subcellular location is the cytoplasm. It catalyses the reaction tRNA(Cys) + L-cysteine + ATP = L-cysteinyl-tRNA(Cys) + AMP + diphosphate. This Gloeothece citriformis (strain PCC 7424) (Cyanothece sp. (strain PCC 7424)) protein is Cysteine--tRNA ligase.